A 436-amino-acid polypeptide reads, in one-letter code: 3-ketoacyl-CoA thiolase (436 aa).

The active-site Acyl-thioester intermediate is the cysteine 99. Catalysis depends on proton acceptor residues histidine 392 and cysteine 422.

The protein belongs to the thiolase-like superfamily. Thiolase family. Heterotetramer of two alpha chains (FadJ) and two beta chains (FadI).

It localises to the cytoplasm. It carries out the reaction an acyl-CoA + acetyl-CoA = a 3-oxoacyl-CoA + CoA. The protein operates within lipid metabolism; fatty acid beta-oxidation. Catalyzes the final step of fatty acid oxidation in which acetyl-CoA is released and the CoA ester of a fatty acid two carbons shorter is formed. The protein is 3-ketoacyl-CoA thiolase of Salmonella typhimurium (strain LT2 / SGSC1412 / ATCC 700720).